A 179-amino-acid polypeptide reads, in one-letter code: Large ribosomal subunit protein uL5 (179 aa).

It belongs to the universal ribosomal protein uL5 family. In terms of assembly, part of the 50S ribosomal subunit; part of the 5S rRNA/L5/L18/L25 subcomplex. Contacts the 5S rRNA and the P site tRNA. Forms a bridge to the 30S subunit in the 70S ribosome.

In terms of biological role, this is one of the proteins that bind and probably mediate the attachment of the 5S RNA into the large ribosomal subunit, where it forms part of the central protuberance. In the 70S ribosome it contacts protein S13 of the 30S subunit (bridge B1b), connecting the 2 subunits; this bridge is implicated in subunit movement. Contacts the P site tRNA; the 5S rRNA and some of its associated proteins might help stabilize positioning of ribosome-bound tRNAs. This Clostridium perfringens (strain ATCC 13124 / DSM 756 / JCM 1290 / NCIMB 6125 / NCTC 8237 / Type A) protein is Large ribosomal subunit protein uL5.